Consider the following 217-residue polypeptide: Large ribosomal subunit protein uL3 (217 aa).

Residues 129-162 (SRGPMSHGSKNHRAPGSTGAGTTPGRIYPGKRMA) are disordered. Low complexity predominate over residues 142–153 (APGSTGAGTTPG).

The protein belongs to the universal ribosomal protein uL3 family. In terms of assembly, part of the 50S ribosomal subunit. Forms a cluster with proteins L14 and L19.

In terms of biological role, one of the primary rRNA binding proteins, it binds directly near the 3'-end of the 23S rRNA, where it nucleates assembly of the 50S subunit. This Prochlorococcus marinus (strain MIT 9215) protein is Large ribosomal subunit protein uL3.